A 384-amino-acid chain; its full sequence is GTPase Obg (384 aa).

In terms of domain architecture, Obg spans 1-159; it reads MKFIDEAKIE…RSLQLELKVL (159 aa). The tract at residues 20–46 is disordered; the sequence is ATSFRREKFVPRGGPDGGDGGKGGSVW. The segment covering 33 to 43 has biased composition (gly residues); the sequence is GPDGGDGGKGG. The region spanning 160-348 is the OBG-type G domain; sequence ADVGLLGMPN…LVHQINQYLI (189 aa). Residues 166–173, 191–195, 213–216, 284–287, and 329–331 each bind GTP; these read GMPNAGKS, FTTLH, DIPG, NKLD, and SAL. Residues S173 and T193 each coordinate Mg(2+). Positions 364 to 384 are disordered; sequence ATNVEIAEQQPKTDTGVFKPE.

Belongs to the TRAFAC class OBG-HflX-like GTPase superfamily. OBG GTPase family. Monomer. Mg(2+) is required as a cofactor.

It localises to the cytoplasm. Functionally, an essential GTPase which binds GTP, GDP and possibly (p)ppGpp with moderate affinity, with high nucleotide exchange rates and a fairly low GTP hydrolysis rate. Plays a role in control of the cell cycle, stress response, ribosome biogenesis and in those bacteria that undergo differentiation, in morphogenesis control. This chain is GTPase Obg, found in Neisseria meningitidis serogroup A / serotype 4A (strain DSM 15465 / Z2491).